The chain runs to 151 residues: Large ribosomal subunit protein uL13 (151 aa).

The protein belongs to the universal ribosomal protein uL13 family. As to quaternary structure, part of the 50S ribosomal subunit.

In terms of biological role, this protein is one of the early assembly proteins of the 50S ribosomal subunit, although it is not seen to bind rRNA by itself. It is important during the early stages of 50S assembly. The chain is Large ribosomal subunit protein uL13 from Microcystis aeruginosa (strain NIES-843 / IAM M-2473).